Consider the following 399-residue polypeptide: F-box protein At1g10110 (399 aa).

The F-box domain maps to 9–56 (PNWSELVTDILSLVFKHLSFTDFARAKTVCSSWYFASKSSSPRKNHTP).

This is F-box protein At1g10110 from Arabidopsis thaliana (Mouse-ear cress).